Here is a 95-residue protein sequence, read N- to C-terminus: Co-chaperonin GroES (95 aa).

This sequence belongs to the GroES chaperonin family. As to quaternary structure, heptamer of 7 subunits arranged in a ring. Interacts with the chaperonin GroEL.

It is found in the cytoplasm. Together with the chaperonin GroEL, plays an essential role in assisting protein folding. The GroEL-GroES system forms a nano-cage that allows encapsulation of the non-native substrate proteins and provides a physical environment optimized to promote and accelerate protein folding. GroES binds to the apical surface of the GroEL ring, thereby capping the opening of the GroEL channel. The chain is Co-chaperonin GroES from Rickettsia conorii (strain ATCC VR-613 / Malish 7).